A 211-amino-acid chain; its full sequence is tRNA (guanine-N(7)-)-methyltransferase (211 aa).

E44, D69, D96, and D118 together coordinate S-adenosyl-L-methionine. Residue D118 is part of the active site. K122 contacts substrate. Positions 124 to 129 (RHEKRR) are interaction with RNA. Residues D154 and 191-194 (TEYE) contribute to the substrate site.

Belongs to the class I-like SAM-binding methyltransferase superfamily. TrmB family.

The enzyme catalyses guanosine(46) in tRNA + S-adenosyl-L-methionine = N(7)-methylguanosine(46) in tRNA + S-adenosyl-L-homocysteine. The protein operates within tRNA modification; N(7)-methylguanine-tRNA biosynthesis. Functionally, catalyzes the formation of N(7)-methylguanine at position 46 (m7G46) in tRNA. The chain is tRNA (guanine-N(7)-)-methyltransferase from Streptococcus pneumoniae (strain Taiwan19F-14).